Here is a 370-residue protein sequence, read N- to C-terminus: 4-hydroxy-3-methylbut-2-en-1-yl diphosphate synthase (flavodoxin) (370 aa).

[4Fe-4S] cluster contacts are provided by Cys268, Cys271, Cys303, and Glu310.

The protein belongs to the IspG family. It depends on [4Fe-4S] cluster as a cofactor.

The catalysed reaction is (2E)-4-hydroxy-3-methylbut-2-enyl diphosphate + oxidized [flavodoxin] + H2O + 2 H(+) = 2-C-methyl-D-erythritol 2,4-cyclic diphosphate + reduced [flavodoxin]. The protein operates within isoprenoid biosynthesis; isopentenyl diphosphate biosynthesis via DXP pathway; isopentenyl diphosphate from 1-deoxy-D-xylulose 5-phosphate: step 5/6. Functionally, converts 2C-methyl-D-erythritol 2,4-cyclodiphosphate (ME-2,4cPP) into 1-hydroxy-2-methyl-2-(E)-butenyl 4-diphosphate. The sequence is that of 4-hydroxy-3-methylbut-2-en-1-yl diphosphate synthase (flavodoxin) from Bacillus cereus (strain B4264).